Consider the following 188-residue polypeptide: Ion-translocating oxidoreductase complex subunit B (188 aa).

Residues 1–26 (MNGVFLAIGALLPICLAGGALLGYAA) form a hydrophobic region. The 4Fe-4S domain maps to 32 to 90 (QGDPVAEQVNALLPQTQCGQCGYPGCKPYAEAIAAGDKINKCPPGGEATIRALADLLDL). Residues Cys49, Cys52, Cys57, Cys73, Cys113, Cys116, Cys119, Cys123, Cys143, Cys146, Cys149, and Cys153 each coordinate [4Fe-4S] cluster. 2 consecutive 4Fe-4S ferredoxin-type domains span residues 104–133 (RVAYIREAECIGCTKCIQACPVDAIVGAAR) and 134–163 (LMHTVIADECTGCDLCLEPCPVDCIEMRET).

This sequence belongs to the 4Fe4S bacterial-type ferredoxin family. RnfB subfamily. In terms of assembly, the complex is composed of six subunits: RnfA, RnfB, RnfC, RnfD, RnfE and RnfG. [4Fe-4S] cluster is required as a cofactor.

The protein localises to the cell inner membrane. Part of a membrane-bound complex that couples electron transfer with translocation of ions across the membrane. The chain is Ion-translocating oxidoreductase complex subunit B from Pseudomonas aeruginosa (strain UCBPP-PA14).